The primary structure comprises 414 residues: Gamma-glutamyl phosphate reductase (414 aa).

The protein belongs to the gamma-glutamyl phosphate reductase family.

It is found in the cytoplasm. It catalyses the reaction L-glutamate 5-semialdehyde + phosphate + NADP(+) = L-glutamyl 5-phosphate + NADPH + H(+). It participates in amino-acid biosynthesis; L-proline biosynthesis; L-glutamate 5-semialdehyde from L-glutamate: step 2/2. Its function is as follows. Catalyzes the NADPH-dependent reduction of L-glutamate 5-phosphate into L-glutamate 5-semialdehyde and phosphate. The product spontaneously undergoes cyclization to form 1-pyrroline-5-carboxylate. This Bacillus anthracis (strain A0248) protein is Gamma-glutamyl phosphate reductase.